The sequence spans 1372 residues: DNA-directed RNA polymerase subunit beta' (1372 aa).

Zn(2+) is bound by residues cysteine 69, cysteine 71, cysteine 84, and cysteine 87. Mg(2+) contacts are provided by aspartate 460, aspartate 462, and aspartate 464. Cysteine 808, cysteine 882, cysteine 889, and cysteine 892 together coordinate Zn(2+).

The protein belongs to the RNA polymerase beta' chain family. The RNAP catalytic core consists of 2 alpha, 1 beta, 1 beta' and 1 omega subunit. When a sigma factor is associated with the core the holoenzyme is formed, which can initiate transcription. It depends on Mg(2+) as a cofactor. The cofactor is Zn(2+).

The enzyme catalyses RNA(n) + a ribonucleoside 5'-triphosphate = RNA(n+1) + diphosphate. Functionally, DNA-dependent RNA polymerase catalyzes the transcription of DNA into RNA using the four ribonucleoside triphosphates as substrates. The sequence is that of DNA-directed RNA polymerase subunit beta' from Rickettsia bellii (strain OSU 85-389).